The chain runs to 341 residues: Very-long-chain 3-oxoacyl-CoA reductase (341 aa).

A helical membrane pass occupies residues 17 to 37 (ALYGALLLGVYKLTTFALSLV). NADP(+)-binding residues include Val63, Asp117, Asn144, Tyr218, Lys222, Val251, and Ser253. Tyr218 serves as the catalytic Proton donor. Lys222 functions as the Lowers pKa of active site Tyr in the catalytic mechanism.

Belongs to the short-chain dehydrogenases/reductases (SDR) family.

It is found in the endoplasmic reticulum membrane. The catalysed reaction is a very-long-chain (3R)-3-hydroxyacyl-CoA + NADP(+) = a very-long-chain 3-oxoacyl-CoA + NADPH + H(+). It functions in the pathway lipid metabolism; fatty acid biosynthesis. Component of the microsomal membrane bound fatty acid elongation system, which produces the 26-carbon very long-chain fatty acids (VLCFA) from palmitate. Catalyzes the reduction of the 3-ketoacyl-CoA intermediate that is formed in each cycle of fatty acid elongation. VLCFAs serve as precursors for ceramide and sphingolipids. This Meyerozyma guilliermondii (strain ATCC 6260 / CBS 566 / DSM 6381 / JCM 1539 / NBRC 10279 / NRRL Y-324) (Yeast) protein is Very-long-chain 3-oxoacyl-CoA reductase.